We begin with the raw amino-acid sequence, 191 residues long: Cell division protein SepF (191 aa).

Residues 151-164 (SSSPEEASPSSVST) show a composition bias toward low complexity. The segment at 151–191 (SSSPEEASPSSVSTEKTPQYSLGKNTTPEPAWGNSKLSAYS) is disordered. The segment covering 165-178 (EKTPQYSLGKNTTP) has biased composition (polar residues).

This sequence belongs to the SepF family. As to quaternary structure, homodimer. Interacts with FtsZ.

Its subcellular location is the cytoplasm. Cell division protein that is part of the divisome complex and is recruited early to the Z-ring. Probably stimulates Z-ring formation, perhaps through the cross-linking of FtsZ protofilaments. Its function overlaps with FtsA. This is Cell division protein SepF from Prochlorococcus marinus (strain MIT 9301).